The sequence spans 185 residues: Ribosome-recycling factor (185 aa).

The protein belongs to the RRF family.

It is found in the cytoplasm. Functionally, responsible for the release of ribosomes from messenger RNA at the termination of protein biosynthesis. May increase the efficiency of translation by recycling ribosomes from one round of translation to another. The chain is Ribosome-recycling factor from Zymomonas mobilis subsp. mobilis (strain ATCC 31821 / ZM4 / CP4).